Reading from the N-terminus, the 99-residue chain is NADH-quinone oxidoreductase subunit K (99 aa).

3 helical membrane-spanning segments follow: residues 3–23 (PDNY…GVLL), 28–48 (IVMF…FVTF), and 59–79 (VVAF…LAII).

Belongs to the complex I subunit 4L family. As to quaternary structure, NDH-1 is composed of 14 different subunits. Subunits NuoA, H, J, K, L, M, N constitute the membrane sector of the complex.

The protein localises to the cell membrane. It catalyses the reaction a quinone + NADH + 5 H(+)(in) = a quinol + NAD(+) + 4 H(+)(out). Its function is as follows. NDH-1 shuttles electrons from NADH, via FMN and iron-sulfur (Fe-S) centers, to quinones in the respiratory chain. The immediate electron acceptor for the enzyme in this species is believed to be a menaquinone. Couples the redox reaction to proton translocation (for every two electrons transferred, four hydrogen ions are translocated across the cytoplasmic membrane), and thus conserves the redox energy in a proton gradient. The sequence is that of NADH-quinone oxidoreductase subunit K from Mycolicibacterium vanbaalenii (strain DSM 7251 / JCM 13017 / BCRC 16820 / KCTC 9966 / NRRL B-24157 / PYR-1) (Mycobacterium vanbaalenii).